Here is a 988-residue protein sequence, read N- to C-terminus: Chitin synthase 1 (988 aa).

Positions Q29–P75 are disordered. The span at P44 to S66 shows a compositional bias: low complexity. The next 7 membrane-spanning stretches (helical) occupy residues W577–W596, F616–V636, I656–L676, I732–F752, S764–C784, Y864–Y884, and A911–I931. Positions A950–G988 are disordered. The segment covering S957–S976 has biased composition (low complexity).

It belongs to the chitin synthase family. Class II subfamily.

The protein resides in the cell membrane. The catalysed reaction is [(1-&gt;4)-N-acetyl-beta-D-glucosaminyl](n) + UDP-N-acetyl-alpha-D-glucosamine = [(1-&gt;4)-N-acetyl-beta-D-glucosaminyl](n+1) + UDP + H(+). Polymerizes chitin, a structural polymer of the cell wall and septum, by transferring the sugar moiety of UDP-GlcNAc to the non-reducing end of the growing chitin polymer. CHS1 mainly responsible for normal yeast cell reproductive growth. This is Chitin synthase 1 from Exophiala dermatitidis (Black yeast-like fungus).